We begin with the raw amino-acid sequence, 881 residues long: Alanine--tRNA ligase (881 aa).

The Zn(2+) site is built by histidine 566, histidine 570, cysteine 668, and histidine 672.

It belongs to the class-II aminoacyl-tRNA synthetase family. Zn(2+) is required as a cofactor.

Its subcellular location is the cytoplasm. The enzyme catalyses tRNA(Ala) + L-alanine + ATP = L-alanyl-tRNA(Ala) + AMP + diphosphate. Catalyzes the attachment of alanine to tRNA(Ala) in a two-step reaction: alanine is first activated by ATP to form Ala-AMP and then transferred to the acceptor end of tRNA(Ala). Also edits incorrectly charged Ser-tRNA(Ala) and Gly-tRNA(Ala) via its editing domain. This is Alanine--tRNA ligase from Frankia alni (strain DSM 45986 / CECT 9034 / ACN14a).